The primary structure comprises 28 residues: Humanin-like 4 (28 aa).

This sequence belongs to the humanin family. Highly expressed in testis. Also expressed in kidney, heart, skeletal muscles and brain.

The protein localises to the secreted. It is found in the cytoplasm. Plays a role as a neuroprotective and antiapoptotic factor. The polypeptide is Humanin-like 4 (Homo sapiens (Human)).